Consider the following 392-residue polypeptide: Putative F-box protein At1g71320 (392 aa).

In terms of domain architecture, F-box spans 8–55 (NPKTIFIPDDIAEGIFHHLPIKSLARFKVLSKKWTSMIESTYFSHKRL).

In Arabidopsis thaliana (Mouse-ear cress), this protein is Putative F-box protein At1g71320.